Consider the following 353-residue polypeptide: Holliday junction branch migration complex subunit RuvB (353 aa).

The tract at residues Ala-4–Tyr-185 is large ATPase domain (RuvB-L). ATP contacts are provided by residues Ile-24, Arg-25, Gly-66, Lys-69, Thr-70, Thr-71, Glu-132–Phe-134, Arg-175, Tyr-185, and Arg-222. Thr-70 serves as a coordination point for Mg(2+). Residues Asn-186–Asp-256 are small ATPAse domain (RuvB-S). The tract at residues Glu-259–Leu-353 is head domain (RuvB-H). Positions 295, 314, and 319 each coordinate DNA.

The protein belongs to the RuvB family. In terms of assembly, homohexamer. Forms an RuvA(8)-RuvB(12)-Holliday junction (HJ) complex. HJ DNA is sandwiched between 2 RuvA tetramers; dsDNA enters through RuvA and exits via RuvB. An RuvB hexamer assembles on each DNA strand where it exits the tetramer. Each RuvB hexamer is contacted by two RuvA subunits (via domain III) on 2 adjacent RuvB subunits; this complex drives branch migration. In the full resolvosome a probable DNA-RuvA(4)-RuvB(12)-RuvC(2) complex forms which resolves the HJ.

The protein localises to the cytoplasm. The catalysed reaction is ATP + H2O = ADP + phosphate + H(+). Functionally, the RuvA-RuvB-RuvC complex processes Holliday junction (HJ) DNA during genetic recombination and DNA repair, while the RuvA-RuvB complex plays an important role in the rescue of blocked DNA replication forks via replication fork reversal (RFR). RuvA specifically binds to HJ cruciform DNA, conferring on it an open structure. The RuvB hexamer acts as an ATP-dependent pump, pulling dsDNA into and through the RuvAB complex. RuvB forms 2 homohexamers on either side of HJ DNA bound by 1 or 2 RuvA tetramers; 4 subunits per hexamer contact DNA at a time. Coordinated motions by a converter formed by DNA-disengaged RuvB subunits stimulates ATP hydrolysis and nucleotide exchange. Immobilization of the converter enables RuvB to convert the ATP-contained energy into a lever motion, pulling 2 nucleotides of DNA out of the RuvA tetramer per ATP hydrolyzed, thus driving DNA branch migration. The RuvB motors rotate together with the DNA substrate, which together with the progressing nucleotide cycle form the mechanistic basis for DNA recombination by continuous HJ branch migration. Branch migration allows RuvC to scan DNA until it finds its consensus sequence, where it cleaves and resolves cruciform DNA. The chain is Holliday junction branch migration complex subunit RuvB from Pseudomonas syringae pv. tomato (strain ATCC BAA-871 / DC3000).